A 214-amino-acid polypeptide reads, in one-letter code: uncharacterized protein (214 aa).

Its function is as follows. URF2 product may be involved in the transfer of iron-sulfur clusters to the NADH dehydrogenase complex. It may also be required for the assembly of the NADH dehydrogenase complex. This is an uncharacterized protein from Paracoccus denitrificans.